Reading from the N-terminus, the 712-residue chain is Cyclolysin secretion/processing ATP-binding protein CyaB (712 aa).

The Peptidase C39 domain maps to 7–128 (QCASVPDSGL…ALWAGELLLC (122 aa)). An ABC transmembrane type-1 domain is found at 157–439 (IGEVLLISLV…LAQLWNDFQQ (283 aa)). Transmembrane regions (helical) follow at residues 160–180 (VLLI…FFQV), 194–214 (LNVI…LTGI), 272–292 (AVTV…MFFY), 298–318 (LVVL…TPVL), 367–387 (VAAG…VTLI), and 390–410 (LVAL…RMTV). One can recognise an ABC transporter domain in the interval 471–706 (IELDRVSFRY…GGLYARLQAL (236 aa)). 505-512 (GRSGSGKS) is an ATP binding site.

Belongs to the ABC transporter superfamily. Cyclolysin exporter (TC 3.A.1.109.2) family.

It is found in the cell membrane. Its function is as follows. Involved in the export of calmodulin-sensitive adenylate cyclase-hemolysin (cyclolysin). The protein is Cyclolysin secretion/processing ATP-binding protein CyaB (cyaB) of Bordetella pertussis (strain Tohama I / ATCC BAA-589 / NCTC 13251).